A 187-amino-acid polypeptide reads, in one-letter code: 2-oxoglutarate synthase subunit KorC (187 aa).

In terms of assembly, heterotetramer of the KorA, KorB, KorC and KorD subunits.

The catalysed reaction is 2 oxidized [2Fe-2S]-[ferredoxin] + 2-oxoglutarate + CoA = succinyl-CoA + 2 reduced [2Fe-2S]-[ferredoxin] + CO2 + H(+). This is 2-oxoglutarate synthase subunit KorC (korC) from Methanocaldococcus jannaschii (strain ATCC 43067 / DSM 2661 / JAL-1 / JCM 10045 / NBRC 100440) (Methanococcus jannaschii).